The sequence spans 251 residues: Triosephosphate isomerase (251 aa).

9 to 11 (NWK) contacts substrate. The active-site Electrophile is the His-93. Glu-163 acts as the Proton acceptor in catalysis. Substrate-binding positions include Gly-169, Ser-209, and 230 to 231 (GG).

It belongs to the triosephosphate isomerase family. In terms of assembly, homodimer.

It localises to the cytoplasm. The catalysed reaction is D-glyceraldehyde 3-phosphate = dihydroxyacetone phosphate. Its pathway is carbohydrate biosynthesis; gluconeogenesis. It functions in the pathway carbohydrate degradation; glycolysis; D-glyceraldehyde 3-phosphate from glycerone phosphate: step 1/1. In terms of biological role, involved in the gluconeogenesis. Catalyzes stereospecifically the conversion of dihydroxyacetone phosphate (DHAP) to D-glyceraldehyde-3-phosphate (G3P). The protein is Triosephosphate isomerase of Ruegeria pomeroyi (strain ATCC 700808 / DSM 15171 / DSS-3) (Silicibacter pomeroyi).